A 223-amino-acid chain; its full sequence is Small ribosomal subunit protein uS3 (223 aa).

Positions 39–108 (IRKFVKKKGA…VILINIVEVK (70 aa)) constitute a KH type-2 domain.

Belongs to the universal ribosomal protein uS3 family. In terms of assembly, part of the 30S ribosomal subunit. Forms a tight complex with proteins S10 and S14.

Functionally, binds the lower part of the 30S subunit head. Binds mRNA in the 70S ribosome, positioning it for translation. This chain is Small ribosomal subunit protein uS3, found in Clostridium kluyveri (strain NBRC 12016).